The chain runs to 334 residues: Chitin synthase export chaperone (334 aa).

7 helical membrane passes run 49–69, 88–108, 123–143, 159–179, 185–205, 220–240, and 250–270; these read IIFE…TVIM, FFYL…GVVP, GFSS…FQLY, LAAF…WAGL, VGLF…YVAM, LGDI…LYAF, and HYLD…MMVY.

This sequence belongs to the CHS7 family. As to quaternary structure, interacts with CHS3.

The protein resides in the endoplasmic reticulum membrane. In terms of biological role, chaperone required for the export of the chitin synthase CHS3 from the endoplasmic reticulum. The chain is Chitin synthase export chaperone (CHS7) from Gibberella zeae (strain ATCC MYA-4620 / CBS 123657 / FGSC 9075 / NRRL 31084 / PH-1) (Wheat head blight fungus).